The chain runs to 240 residues: UDP-2,3-diacylglucosamine hydrolase (240 aa).

D8, H10, D41, N79, and H114 together coordinate Mn(2+). 79–80 (NR) lines the substrate pocket. D122, S160, N164, K167, and H195 together coordinate substrate. Mn(2+)-binding residues include H195 and H197.

Belongs to the LpxH family. Requires Mn(2+) as cofactor.

It localises to the cell inner membrane. It carries out the reaction UDP-2-N,3-O-bis[(3R)-3-hydroxytetradecanoyl]-alpha-D-glucosamine + H2O = 2-N,3-O-bis[(3R)-3-hydroxytetradecanoyl]-alpha-D-glucosaminyl 1-phosphate + UMP + 2 H(+). It functions in the pathway glycolipid biosynthesis; lipid IV(A) biosynthesis; lipid IV(A) from (3R)-3-hydroxytetradecanoyl-[acyl-carrier-protein] and UDP-N-acetyl-alpha-D-glucosamine: step 4/6. Hydrolyzes the pyrophosphate bond of UDP-2,3-diacylglucosamine to yield 2,3-diacylglucosamine 1-phosphate (lipid X) and UMP by catalyzing the attack of water at the alpha-P atom. Involved in the biosynthesis of lipid A, a phosphorylated glycolipid that anchors the lipopolysaccharide to the outer membrane of the cell. This chain is UDP-2,3-diacylglucosamine hydrolase, found in Salmonella newport (strain SL254).